The sequence spans 167 residues: Plastocyanin major isoform, chloroplastic (167 aa).

The transit peptide at 1–52 (MASVTSATVAIPSFTGLKASTIKSSATVRIQTAAVASPKLTVKSSLKNFGVA) directs the protein to the chloroplast. The transit peptide at 53–68 (AVAAAASIALAGNAMA) directs the protein to the thylakoid. In terms of domain architecture, Plastocyanin-like spans 69-167 (IEVLLGGGDG…AGMVGKVTVN (99 aa)). Cu cation-binding residues include His-105, Cys-152, His-155, and Met-160.

It belongs to the plastocyanin family. It depends on Cu(2+) as a cofactor.

The protein localises to the plastid. It is found in the chloroplast thylakoid membrane. Its function is as follows. Participates in electron transfer between P700 and the cytochrome b6-f complex in photosystem I. Seems to be the major plastocyanin in Arabidopsis. This Arabidopsis thaliana (Mouse-ear cress) protein is Plastocyanin major isoform, chloroplastic (DRT112).